The chain runs to 169 residues: RNA annealing protein YRA2 (169 aa).

The 75-residue stretch at 45 to 119 folds into the RRM domain; sequence KRLRFTNVPL…GTVTVEIFEQ (75 aa). A disordered region spans residues 119–169; sequence QERRPDRRRRTQRDNRRGNGRGSRGSHYKRQDRPAMEDELNAELEDYMKSS.

Belongs to the YRA1 family. Associates with mRNPs.

The protein localises to the nucleus. Its function is as follows. Involved in export of poly(A) mRNAs from the nucleus. Recruited to the coding sequences as well as poly-A sites of active genes. The polypeptide is RNA annealing protein YRA2 (YRA2) (Zygosaccharomyces rouxii (strain ATCC 2623 / CBS 732 / NBRC 1130 / NCYC 568 / NRRL Y-229)).